We begin with the raw amino-acid sequence, 514 residues long: Leucine-rich repeat-containing protein 14B (514 aa).

One copy of the LRR 1; degenerate repeat lies at 104 to 141 (RRRLRVADLTGIRDVQVQRCPCGRALGRWGRTQLLART). The LRR 2; degenerate repeat unit spans residues 185–209 (RVHCPSFRADSLSPSQLLHVLRLAG). Residues 238–277 (FPRLASLTLPTKAFDAPPTYASTPDGEDPLLASIARELSK) form an LRR 4; degenerate repeat. LRR repeat units follow at residues 278-302 (MAQL…LGPL), 303-334 (QTPL…AHLE), 335-350 (VLDL…YPST), 359-386 (SRTL…GLSP), and 387-411 (CHRL…LFTA).

The protein belongs to the PRAME family. LRRC14 subfamily.

In Homo sapiens (Human), this protein is Leucine-rich repeat-containing protein 14B.